The sequence spans 278 residues: HTH-type transcriptional activator RhaS (278 aa).

In terms of domain architecture, HTH araC/xylS-type spans 174-272 (NLLLAWLEDH…NWSPRDIRQG (99 aa)). 2 consecutive DNA-binding regions (H-T-H motif) follow at residues 191 to 212 (DAVA…KQQT) and 239 to 262 (VTDI…RREF).

Binds DNA as a dimer.

Its subcellular location is the cytoplasm. Its function is as follows. Activates expression of the rhaBAD and rhaT operons. The polypeptide is HTH-type transcriptional activator RhaS (Escherichia coli (strain SMS-3-5 / SECEC)).